Reading from the N-terminus, the 278-residue chain is Dermonecrotic toxin LbSicTox-betaIA1a (278 aa).

Residue His-12 is part of the active site. Residues Glu-32 and Asp-34 each coordinate Mg(2+). Residue His-48 is the Nucleophile of the active site. Disulfide bonds link Cys-52-Cys-58 and Cys-54-Cys-197. Asp-92 is a Mg(2+) binding site. Asn-258 carries N-linked (GlcNAc...) asparagine glycosylation.

This sequence belongs to the arthropod phospholipase D family. Class II subfamily. Class IIb sub-subfamily. As to expression, expressed by the venom gland.

It localises to the secreted. The enzyme catalyses an N-(acyl)-sphingosylphosphoethanolamine = an N-(acyl)-sphingosyl-1,3-cyclic phosphate + ethanolamine. It catalyses the reaction a 1-acyl-sn-glycero-3-phosphocholine = a 1-acyl-sn-glycero-2,3-cyclic phosphate + choline. It carries out the reaction a 1-acyl-sn-glycero-3-phosphoethanolamine = a 1-acyl-sn-glycero-2,3-cyclic phosphate + ethanolamine. Its function is as follows. This toxin does not show activity on sphingomyelin (SM) and does not show dermonecrotic activities. This toxin is a member of dermonecrotic toxins that cleave the phosphodiester linkage between the phosphate and headgroup of certain phospholipids (sphingolipid and lysolipid substrates), forming an alcohol (often choline) and a cyclic phosphate. It may act on ceramide phosphoethanolamine (CPE), lysophosphatidylcholine (LPC) and lysophosphatidylethanolamine (LPE), but not on lysophosphatidylserine (LPS), and lysophosphatidylglycerol (LPG). It may act by transphosphatidylation, releasing exclusively cyclic phosphate products as second products. The chain is Dermonecrotic toxin LbSicTox-betaIA1a from Loxosceles boneti (North American fiddleback spider).